Consider the following 343-residue polypeptide: 3-isopropylmalate dehydrogenase (343 aa).

Residues Arg94, Arg104, Arg128, and Asp218 each coordinate substrate. Asp218, Asp242, and Asp246 together coordinate Mg(2+). 278–290 serves as a coordination point for NAD(+); it reads GSAPDIAGQNKAN.

This sequence belongs to the isocitrate and isopropylmalate dehydrogenases family. LeuB type 2 subfamily. Homodimer. Mg(2+) is required as a cofactor. Requires Mn(2+) as cofactor.

It localises to the cytoplasm. The catalysed reaction is (2R,3S)-3-isopropylmalate + NAD(+) = 4-methyl-2-oxopentanoate + CO2 + NADH. It participates in amino-acid biosynthesis; L-leucine biosynthesis; L-leucine from 3-methyl-2-oxobutanoate: step 3/4. In terms of biological role, catalyzes the oxidation of 3-carboxy-2-hydroxy-4-methylpentanoate (3-isopropylmalate) to 3-carboxy-4-methyl-2-oxopentanoate. The product decarboxylates to 4-methyl-2 oxopentanoate. In Bifidobacterium longum subsp. infantis (strain ATCC 15697 / DSM 20088 / JCM 1222 / NCTC 11817 / S12), this protein is 3-isopropylmalate dehydrogenase.